We begin with the raw amino-acid sequence, 188 residues long: Ribosome maturation factor RimP (188 aa).

It belongs to the RimP family.

The protein localises to the cytoplasm. Functionally, required for maturation of 30S ribosomal subunits. This is Ribosome maturation factor RimP from Erythrobacter litoralis (strain HTCC2594).